The chain runs to 406 residues: Beta-galactoside alpha-2,6-sialyltransferase 1 (406 aa).

Topologically, residues 1–9 (MIHTNLKKK) are cytoplasmic. Residues 10 to 26 (FSCCVLVFLLFAVICVW) form a helical; Signal-anchor for type II membrane protein membrane-spanning segment. Over 27–406 (KEKKKGSYYD…TLPGFRTIHC (380 aa)) the chain is Lumenal. 3 disulfide bridges follow: Cys142/Cys406, Cys184/Cys335, and Cys353/Cys364. Residues Asn149 and Asn161 are each glycosylated (N-linked (GlcNAc...) asparagine). Substrate-binding positions include Ser189, Asn212, Asn233, 322–324 (SSG), Cys353, Tyr354, Thr365, Tyr369, His370, and Lys376. At Tyr369 the chain carries Phosphotyrosine.

This sequence belongs to the glycosyltransferase 29 family. In terms of assembly, monomer and homodimer. In terms of processing, N-glycosylated.

The protein resides in the golgi apparatus. The protein localises to the golgi stack membrane. It localises to the secreted. The enzyme catalyses a beta-D-galactoside + CMP-N-acetyl-beta-neuraminate = an N-acetyl-alpha-neuraminyl-(2-&gt;6)-beta-D-galactosyl derivative + CMP + H(+). It functions in the pathway protein modification; protein glycosylation. Inhibited by CTP. Transfers sialic acid from CMP-sialic acid to galactose-containing acceptor substrates. In B lymphocytes, generates neuraminidase-sensitive lymphocyte cell-surface differentiation antigens, such as CDw75, HB-6 and CD76. The sequence is that of Beta-galactoside alpha-2,6-sialyltransferase 1 (ST6GAL1) from Homo sapiens (Human).